A 408-amino-acid polypeptide reads, in one-letter code: tRNA-specific 2-thiouridylase MnmA (408 aa).

Residues 27 to 34 (AMSGGVDS) and leucine 53 contribute to the ATP site. The Nucleophile role is filled by cysteine 121. A disulfide bridge links cysteine 121 with cysteine 222. ATP is bound at residue glycine 145. The interval 172-174 (RDQ) is interaction with tRNA. The Cysteine persulfide intermediate role is filled by cysteine 222.

The protein belongs to the MnmA/TRMU family.

It is found in the cytoplasm. It carries out the reaction S-sulfanyl-L-cysteinyl-[protein] + uridine(34) in tRNA + AH2 + ATP = 2-thiouridine(34) in tRNA + L-cysteinyl-[protein] + A + AMP + diphosphate + H(+). Catalyzes the 2-thiolation of uridine at the wobble position (U34) of tRNA, leading to the formation of s(2)U34. The protein is tRNA-specific 2-thiouridylase MnmA of Rhizobium johnstonii (strain DSM 114642 / LMG 32736 / 3841) (Rhizobium leguminosarum bv. viciae).